Here is a 395-residue protein sequence, read N- to C-terminus: Thyroid hormone receptor beta (395 aa).

The segment at 1 to 31 (MSEPAENCSPRWKDEAIQNGYIPSYLDKDEL) is modulating. Residues C32, C35, C49, C52, C70, C76, C86, and C89 each contribute to the Zn(2+) site. NR C4-type zinc fingers lie at residues 32–52 (CVVC…CEGC) and 70–94 (CKYE…FKKC). Residues 32 to 99 (CVVCGDKATG…RFKKCIAVGM (68 aa)) constitute a DNA-binding region (nuclear receptor). An NR LBD domain is found at 142 to 395 (EEWDLIRMVT…PPLFLEVFED (254 aa)). 3,3',5-triiodo-L-thyronine is bound by residues R216, N265, and H369. Residues R216, N265, and H369 each contribute to the L-thyroxine site.

The protein belongs to the nuclear hormone receptor family. NR1 subfamily.

Its subcellular location is the nucleus. In terms of biological role, nuclear hormone receptor that can act as a repressor or activator of transcription. High affinity receptor for thyroid hormones, including triiodothyronine and thyroxine. The chain is Thyroid hormone receptor beta (thrb) from Paralichthys olivaceus (Bastard halibut).